Here is a 108-residue protein sequence, read N- to C-terminus: Transmembrane protein 265 (108 aa).

Transmembrane regions (helical) follow at residues 34–54 (AATS…VFAI) and 78–98 (LILA…LLLW).

The protein belongs to the CD225/Dispanin family.

Its subcellular location is the membrane. The chain is Transmembrane protein 265 from Homo sapiens (Human).